The following is a 367-amino-acid chain: Probable ATP-dependent RNA helicase MJ0669 (367 aa).

Positions 6–34 (MNFNELNLSDNILNAIRNKGFEKPTDIQM) match the Q motif motif. A Helicase ATP-binding domain is found at 38 to 206 (PLFLNDEYNI…KKYMGDYSFI (169 aa)). Residue 51–58 (ARTGSGKT) participates in ATP binding. A DEAD box motif is present at residues 154-157 (DEAD). The Helicase C-terminal domain occupies 213 to 367 (NIEQSYVEVN…KLKIKKLKFG (155 aa)).

Belongs to the DEAD box helicase family. In terms of assembly, homodimer.

It carries out the reaction ATP + H2O = ADP + phosphate + H(+). The polypeptide is Probable ATP-dependent RNA helicase MJ0669 (Methanocaldococcus jannaschii (strain ATCC 43067 / DSM 2661 / JAL-1 / JCM 10045 / NBRC 100440) (Methanococcus jannaschii)).